The following is a 714-amino-acid chain: Hormonally up-regulated neu tumor-associated kinase (714 aa).

Residues 1–16 (MPAAAGDGLLGEPAAP) are compositionally biased toward low complexity. The disordered stretch occupies residues 1 to 28 (MPAAAGDGLLGEPAAPGGDGGAEDTTRP). The Protein kinase domain maps to 62 to 320 (LIGSRKLGEG…IQQALANRWL (259 aa)). ATP contacts are provided by residues 68-76 (LGEGSFAKV) and Lys-91. Asp-186 acts as the Proton acceptor in catalysis. A compositionally biased stretch (basic and acidic residues) spans 624-635 (HEEKNSPPKEEG). Disordered stretches follow at residues 624 to 658 (HEEKNSPPKEEGVCSPPPVPSNGLLQPLGSPNCVK) and 674 to 714 (KRHQ…KGQC). The segment covering 692–703 (SPLQPTAPSSLS) has biased composition (polar residues).

This sequence belongs to the protein kinase superfamily. CAMK Ser/Thr protein kinase family. SNF1 subfamily.

The enzyme catalyses L-seryl-[protein] + ATP = O-phospho-L-seryl-[protein] + ADP + H(+). The catalysed reaction is L-threonyl-[protein] + ATP = O-phospho-L-threonyl-[protein] + ADP + H(+). This chain is Hormonally up-regulated neu tumor-associated kinase (Hunk), found in Mus musculus (Mouse).